The sequence spans 110 residues: Tyrosine-protein phosphatase 3 (110 aa).

In terms of domain architecture, Tyrosine-protein phosphatase spans 1-110 (QKCATIVMVT…NPPHSGPIVV (110 aa)). Asp80 is a substrate binding site.

This sequence belongs to the protein-tyrosine phosphatase family.

The enzyme catalyses O-phospho-L-tyrosyl-[protein] + H2O = L-tyrosyl-[protein] + phosphate. This chain is Tyrosine-protein phosphatase 3 (STY-3), found in Styela plicata (Wrinkled sea squirt).